We begin with the raw amino-acid sequence, 268 residues long: Nickel import ATP-binding protein NikE (268 aa).

Positions 4 to 252 (LNVSDLSHHY…SSDAGRVLQN (249 aa)) constitute an ABC transporter domain. Residue 45–52 (GRSGCGKS) coordinates ATP.

It belongs to the ABC transporter superfamily. Nickel importer (TC 3.A.1.5.3) family. In terms of assembly, the complex is composed of two ATP-binding proteins (NikD and NikE), two transmembrane proteins (NikB and NikC) and a solute-binding protein (NikA).

It localises to the cell inner membrane. The enzyme catalyses Ni(2+)(out) + ATP + H2O = Ni(2+)(in) + ADP + phosphate + H(+). Its function is as follows. Part of the ABC transporter complex NikABCDE involved in nickel import. Responsible for energy coupling to the transport system. This Shigella dysenteriae serotype 1 (strain Sd197) protein is Nickel import ATP-binding protein NikE.